The sequence spans 262 residues: uncharacterized protein (262 aa).

6 residues coordinate a divalent metal cation: His7, His9, Glu96, His132, His156, and Asp211.

Belongs to the metallo-dependent hydrolases superfamily. TatD-type hydrolase family. The cofactor is a divalent metal cation.

This is an uncharacterized protein from Mycoplasma genitalium (strain ATCC 33530 / DSM 19775 / NCTC 10195 / G37) (Mycoplasmoides genitalium).